Here is a 281-residue protein sequence, read N- to C-terminus: UPF0294 protein VP2298 (281 aa).

It belongs to the UPF0294 family.

Its subcellular location is the cytoplasm. This chain is UPF0294 protein VP2298, found in Vibrio parahaemolyticus serotype O3:K6 (strain RIMD 2210633).